The chain runs to 384 residues: uncharacterized protein (384 aa).

Residues 327–339 (KKEKKEKKEKKPK) are compositionally biased toward basic residues. Residues 327 to 358 (KKEKKEKKEKKPKKAVEEEPKQYLTPEFVNDD) form a disordered region.

This is an uncharacterized protein from Magallana gigas (Pacific oyster).